The following is a 600-amino-acid chain: MTTQAPPNALLPLSPEQLARLQTATHDFTPTQLAWLSGYFWGMVNQQPGAAVMQKPAAPASVITLISASQTGNARRVAEALRDDLLAAQLNVNLVNAGDYKFKQIAQEKLLIVVASTQGEGDPPEEAVALHKFLLSKKAPKLDGTAFAVFGLGDTSYEHFCQAGKDFDTRLAELGAERLLDRVDADVEYQAAAQAWRQRVVDVLKARVPKEAPSQAAITASGAVNLVDSTPYTKESPLTATLSVNQKITGRHSEKDVRHIEIDLGDAGLRYQPGDALGVWYQNDPALVQELLELLWLKGDEPVTVGEKTLPLSEALQWHFELTVNTAAIVENYATLTRSEALLPLVGDKAKLQDYAARTPIVDMVRFAPAQLEADQLLGLLRPLTPRLYSIASSQAEVENEVHITVGVVRFDIEGRVRAGGASSYLADRLEEDSEVRVFIEHNDNFRLPATPETPVIMIGPGTGIAPFRAFMQQREADGATGKNWLFFGNPHFTEDFLYQVEWQRYVKEGLLTRIDLAWSRDQDHKIYVQDKIREQGAELWRWLQEGAHLYVCGDANRMAKDVEQALLEVIAAYGGMDAEAADEYLSELRVERRYQRDVY.

The Flavodoxin-like domain occupies 63–201 (ITLISASQTG…AAQAWRQRVV (139 aa)). FMN contacts are provided by residues 69 to 74 (SQTGNA), 116 to 119 (STQG), and 152 to 161 (LGDTSYEHFC). Residues 235-449 (ESPLTATLSV…IEHNDNFRLP (215 aa)) enclose the FAD-binding FR-type domain. Residues Thr323, Ala357, 387–390 (RLYS), 405–407 (TVG), and 420–423 (GGAS) each bind FAD. NADP(+) contacts are provided by residues 520–521 (SR), 526–530 (KIYVQ), and Asp562. Tyr600 contacts FAD.

The protein belongs to the NADPH-dependent sulphite reductase flavoprotein subunit CysJ family. In the N-terminal section; belongs to the flavodoxin family. It in the C-terminal section; belongs to the flavoprotein pyridine nucleotide cytochrome reductase family. In terms of assembly, alpha(8)-beta(8). The alpha component is a flavoprotein, the beta component is a hemoprotein. FAD is required as a cofactor. The cofactor is FMN.

It catalyses the reaction hydrogen sulfide + 3 NADP(+) + 3 H2O = sulfite + 3 NADPH + 4 H(+). Its pathway is sulfur metabolism; hydrogen sulfide biosynthesis; hydrogen sulfide from sulfite (NADPH route): step 1/1. Component of the sulfite reductase complex that catalyzes the 6-electron reduction of sulfite to sulfide. This is one of several activities required for the biosynthesis of L-cysteine from sulfate. The flavoprotein component catalyzes the electron flow from NADPH -&gt; FAD -&gt; FMN to the hemoprotein component. This Cronobacter sakazakii (strain ATCC BAA-894) (Enterobacter sakazakii) protein is Sulfite reductase [NADPH] flavoprotein alpha-component.